The chain runs to 519 residues: Matrix metalloproteinase-B (519 aa).

Residues 1 to 26 (MTKWSPNGNPLSTIYLILSLFTLAHT) form the signal peptide. The propeptide at 27–126 (APTTQHSRTT…RQEQTKRTKR (100 aa)) is activation peptide. Residues 29–39 (TTQHSRTTTQL) show a composition bias toward polar residues. The interval 29–50 (TTQHSRTTTQLRLEDEDGGGGV) is disordered. Residues 109 to 116 (PRCTQTDV) carry the Cysteine switch motif. Zn(2+)-binding residues include cysteine 111, histidine 208, aspartate 210, histidine 232, histidine 247, and histidine 276. Glutamate 277 is an active-site residue. Histidine 280 and histidine 286 together coordinate Zn(2+). An N-linked (GlcNAc...) asparagine glycan is attached at asparagine 341. Over residues 391–402 (KDKRSYRGDSKI) the composition is skewed to basic and acidic residues. The interval 391 to 410 (KDKRSYRGDSKIPKCSSNNS) is disordered. Asparagine 408 carries an N-linked (GlcNAc...) asparagine glycan.

The protein belongs to the peptidase M10A family. Zn(2+) serves as cofactor. Expressed in spermatheca and spermathecal-uterine valve, weakly in vulva and anal muscles and in two cells in the head (probably RMEV and RMED motor neurons).

The protein localises to the secreted. It is found in the extracellular space. Its subcellular location is the extracellular matrix. Its activity is regulated as follows. Inhibited by human TIMP1 and TIMP2 and the broad MMP inhibitors BB94 (Batimastat) and CT543. Functionally, metalloprotease involved in molting, a process during larval stages in which a new cuticle is formed and the old cuticle is shed. Plays a role in thermotolerance probably by preventing the accumulation of oxidized lipoproteins and cholesterol. The protein is Matrix metalloproteinase-B of Caenorhabditis elegans.